A 117-amino-acid polypeptide reads, in one-letter code: NADH-ubiquinone oxidoreductase chain 3 (117 aa).

Transmembrane regions (helical) follow at residues 2-22 (ILYVLPTSLSLCLLLMIIYLL), 56-76 (FFILTVLFLIFDVEVVLLFPV), and 85-105 (SPLIIMSIILFMMVLLIGLLY).

This sequence belongs to the complex I subunit 3 family.

It is found in the mitochondrion membrane. The catalysed reaction is a ubiquinone + NADH + 5 H(+)(in) = a ubiquinol + NAD(+) + 4 H(+)(out). In terms of biological role, core subunit of the mitochondrial membrane respiratory chain NADH dehydrogenase (Complex I) that is believed to belong to the minimal assembly required for catalysis. Complex I functions in the transfer of electrons from NADH to the respiratory chain. The immediate electron acceptor for the enzyme is believed to be ubiquinone. In Albinaria caerulea (Land snail), this protein is NADH-ubiquinone oxidoreductase chain 3 (ND3).